The sequence spans 98 residues: NADH-ubiquinone oxidoreductase chain 4L (98 aa).

3 consecutive transmembrane segments (helical) span residues 1–21 (MTPV…GLAF), 29–49 (ALLC…LWAL), and 58–78 (VAPM…LALL).

This sequence belongs to the complex I subunit 4L family.

It is found in the mitochondrion membrane. The enzyme catalyses a ubiquinone + NADH + 5 H(+)(in) = a ubiquinol + NAD(+) + 4 H(+)(out). In terms of biological role, core subunit of the mitochondrial membrane respiratory chain NADH dehydrogenase (Complex I) which catalyzes electron transfer from NADH through the respiratory chain, using ubiquinone as an electron acceptor. Part of the enzyme membrane arm which is embedded in the lipid bilayer and involved in proton translocation. The protein is NADH-ubiquinone oxidoreductase chain 4L (MT-ND4L) of Oncorhynchus clarkii (Cutthroat trout).